A 258-amino-acid chain; its full sequence is Undecaprenyl-diphosphatase (258 aa).

Transmembrane regions (helical) follow at residues 1-21 (MSIIDAVILGIVEGLTEFLPV), 42-62 (LKCFEVVIQLGSILAVVFTFF), 71-91 (LWIKLIIGFLPTAAIGYLLYS), 96-116 (LFSQNVVVYMLIIWGVIFIVV), 134-154 (GISYKQAFFIGLSQCFAMVPG), 173-193 (QTAAAFSFLLAVPTMFAATFY), 211-231 (LFLLGGFVAFLVALFAIKMFL), and 237-257 (FDYIPFGIYRILIAFAFMFFV).

Belongs to the UppP family.

The protein resides in the cell inner membrane. The catalysed reaction is di-trans,octa-cis-undecaprenyl diphosphate + H2O = di-trans,octa-cis-undecaprenyl phosphate + phosphate + H(+). Catalyzes the dephosphorylation of undecaprenyl diphosphate (UPP). Confers resistance to bacitracin. The chain is Undecaprenyl-diphosphatase from Campylobacter hominis (strain ATCC BAA-381 / DSM 21671 / CCUG 45161 / LMG 19568 / NCTC 13146 / CH001A).